A 128-amino-acid chain; its full sequence is ATP synthase epsilon chain (128 aa).

The interval 98-128 (EALDMPSSTPEQAQIKDAAVRRARGQLRASR) is disordered. Residues 118–128 (RRARGQLRASR) are compositionally biased toward basic residues.

It belongs to the ATPase epsilon chain family. In terms of assembly, F-type ATPases have 2 components, CF(1) - the catalytic core - and CF(0) - the membrane proton channel. CF(1) has five subunits: alpha(3), beta(3), gamma(1), delta(1), epsilon(1). CF(0) has three main subunits: a, b and c.

The protein localises to the cell inner membrane. Its function is as follows. Produces ATP from ADP in the presence of a proton gradient across the membrane. In Rhodopirellula baltica (strain DSM 10527 / NCIMB 13988 / SH1), this protein is ATP synthase epsilon chain.